Consider the following 164-residue polypeptide: Putative pre-16S rRNA nuclease (164 aa).

Belongs to the YqgF nuclease family.

Its subcellular location is the cytoplasm. Functionally, could be a nuclease involved in processing of the 5'-end of pre-16S rRNA. The polypeptide is Putative pre-16S rRNA nuclease (Rhizobium rhizogenes (strain K84 / ATCC BAA-868) (Agrobacterium radiobacter)).